The chain runs to 231 residues: MASQSPKCLMLYSTTDGHTKTIMDTIARQLADETKVRCDVVDIKDGNSYVLADYEKVLLGASIRYGHFSAAFINYVKQHHSELSAMPSAFFSVNLTARKLDKNTATTNVYTRKFLNQSSWSPQLVGVFAGALWYPRYNFFDRVLIQFIMKVTGGETDSTKEIVYTDWAAVRRFASDFAALPLAVPPRPKANTVEKPDGILRSGSGAHCLLAIVGMSAAVIVGIRIIAAKRG.

The region spanning Cys8–Ala178 is the Flavodoxin-like domain. Residues Thr14–His18 and Phe90–Ser158 each bind FMN. The chain crosses the membrane as a helical span at residues Cys208–Ala228.

The protein belongs to the HemG family. It depends on FMN as a cofactor.

The protein resides in the membrane. The enzyme catalyses protoporphyrinogen IX + 3 a menaquinone = protoporphyrin IX + 3 a menaquinol. It catalyses the reaction protoporphyrinogen IX + 3 a ubiquinone = protoporphyrin IX + 3 a ubiquinol. It carries out the reaction protoporphyrinogen IX + 3 a quinone = protoporphyrin IX + 3 a quinol. It functions in the pathway porphyrin-containing compound metabolism; protoporphyrin-IX biosynthesis; protoporphyrin-IX from protoporphyrinogen-IX: step 1/1. In E.coli extracts under anerobic conditions catalyzes the 6-electron oxidation of protoporphyrinogen IX to form protoporphyrin IX, transferring electrons to fumarate reductase, presumably via menaquinone. In vitro under aerobic conditions forms protoporphyrin IX using ubiquinone as an electron acceptor. Complements an E.coli hemG deletion, allowing normal growth in vivo. The sequence is that of Protoporphyrinogen IX dehydrogenase [quinone] from Leishmania major.